The sequence spans 816 residues: Protein kinase C-binding protein NELL2 (816 aa).

A signal peptide spans 1-21 (MESRVLLRTFCLLFGLGAVWG). A Laminin G-like domain is found at 30-258 (IDVLTELELG…AKTSAKLSRA (229 aa)). N-linked (GlcNAc...) asparagine glycans are attached at residues Asn-53, Asn-225, Asn-293, and Asn-298. The VWFC 1 domain occupies 272–331 (RTCTMKGTTYREFESWTDGCKNCTCLNGTIQCETLICPNPDCPLKSAPAYVDGKCCKECK). The 43-residue stretch at 397–439 (GYDFCSERHNCMENSVCRNLNDRAVCSCRDGFRALREDNAYCE) folds into the EGF-like 1 domain. 3 disulfides stabilise this stretch: Cys-401–Cys-413, Cys-407–Cys-422, and Cys-424–Cys-438. Ca(2+) is bound by residues Asp-440, Ile-441, and Glu-443. In terms of domain architecture, EGF-like 2; calcium-binding spans 440 to 481 (DIDECAEGRHYCRENTMCVNTPGSFMCICKTGYIRIDDYSCT). Disulfide bonds link Cys-444–Cys-457, Cys-451–Cys-466, Cys-468–Cys-480, Cys-486–Cys-499, Cys-493–Cys-508, Cys-510–Cys-521, Cys-525–Cys-535, Cys-529–Cys-541, and Cys-543–Cys-552. 3 residues coordinate Ca(2+): Asn-459, Thr-460, and Ser-463. One can recognise an EGF-like 3; calcium-binding domain in the interval 482–522 (EHDECVTNQHNCDENALCFNTVGGHNCVCKPGYTGNGTTCK). N-linked (GlcNAc...) asparagine glycosylation occurs at Asn-517. The EGF-like 4 domain occupies 523–553 (AFCQDGCRNGGACIAANVCACPQGFTGHSCE). Residue Thr-548 is glycosylated (O-linked (GlcNAc...) threonine). 3 residues coordinate Ca(2+): Asp-555, Ile-556, and Glu-558. One can recognise an EGF-like 5; calcium-binding domain in the interval 555–601 (DIDECSDGFVQCDSRANCINLPGWYHCECRDGYHDNGMFSPSGESCE). Disulfide bonds link Cys-559/Cys-572, Cys-566/Cys-581, and Cys-583/Cys-600. Residues Asn-574, Leu-575, and Trp-578 each coordinate Ca(2+). Ca(2+) is bound by residues Asp-602, Ile-603, and Glu-605. Residues 602 to 637 (DIDECGTGRHSCANDTICFNLDGGYDCRCPHGKNCT) enclose the EGF-like 6; calcium-binding domain. Cystine bridges form between Cys-606-Cys-619, Cys-613-Cys-628, and Cys-630-Cys-636. The N-linked (GlcNAc...) asparagine glycan is linked to Asn-615. Ca(2+)-binding residues include Asn-621, Leu-622, and Gly-625. N-linked (GlcNAc...) asparagine glycosylation is present at Asn-635. VWFC domains are found at residues 638–693 (GDCI…PECD) and 698–756 (SQCL…PRCV).

As to quaternary structure, homotrimer. Binds to PRKCB. Interacts with NICOL1; this interaction triggers epididymal differentiation.

The protein localises to the secreted. Its function is as follows. Plays multiple roles in neural tissues, regulates neuronal proliferation, survival, differentiation, polarization, as well as axon guidance and synaptic functions. Plays an important role in axon development during neuronal differentiation through the MAPK intracellular signaling pathway. Via binding to its receptor ROBO3, plays a role in axon guidance, functions as a repulsive guidance cue for commissural axons, helping to steer them across the spinal cord midline. Required for neuron survival through the modulation of MAPK signaling pathways too. Involved in the regulation of hypothalamic GNRH secretion and the control of puberty. In terms of biological role, testicular luminal protein that signals through a ROS1-pathway to regulate the epididymal initial segment (IS) maturation, sperm maturation and male fertility. This Bos taurus (Bovine) protein is Protein kinase C-binding protein NELL2 (NELL2).